Here is a 1233-residue protein sequence, read N- to C-terminus: Structural maintenance of chromosomes protein 1A (1233 aa).

32–39 (GPNGSGKS) contributes to the ATP binding site. Coiled coils occupy residues 104–124 (EYKI…LEKL) and 163–503 (ELAQ…KAEI). Residues 284-293 (IKEKDSELNQ) are compositionally biased toward basic and acidic residues. Disordered regions lie at residues 284–308 (IKEK…TSHK) and 348–369 (QEFE…TLEE). Residues Ser358 and Ser360 each carry the phosphoserine modification. In terms of domain architecture, SMC hinge spans 515 to 629 (VYGRLIDLCQ…DNVEDARRIA (115 aa)). Residues Lys648 and Lys713 each carry the N6-acetyllysine modification. Residues 660–935 (KAKARRWDEK…RHNLLQACKM (276 aa)) are a coiled coil. The segment at 947 to 968 (MDDISQEEGSSQGEDSVSGSQR) is disordered. Low complexity predominate over residues 953–967 (EEGSSQGEDSVSGSQ). Ser957, Ser962, Ser966, and Ser970 each carry phosphoserine. A coiled-coil region spans residues 991–1068 (KDAQAEEEIK…FEQIKKERFD (78 aa)). Position 1037 is an N6-acetyllysine (Lys1037).

It belongs to the SMC family. SMC1 subfamily. Forms a heterodimer with SMC3 in cohesin complexes. Cohesin complexes are composed of the SMC1 (SMC1A or meiosis-specific SMC1B) and SMC3 heterodimer attached via their SMC hinge domain, RAD21 which link them, and one STAG protein (STAG1, STAG2 or meiosis-specific STAG3), which interacts with RAD21. In germ cell cohesin complexes, SMC1A is mutually exclusive with SMC1B. Found in a complex with CDCA5, SMC3 and RAD21, PDS5A/SCC-112 and PDS5B/APRIN. Interacts with NDC80, SYCP2, STAG3, BRCA1 and BRAT1. The cohesin complex interacts with the cohesin loading complex subunits NIPBL/Scc2 (via HEAT repeats) and MAU2/Scc4. NIPBL directly contacts all members of the complex, RAD21, SMC1A/B, SMC3 and STAG1. Interacts with RPGR. Found in a complex containing POLE and SMC3. In terms of processing, phosphorylated upon ionizing radiation or DNA methylation. Phosphorylation of Ser-957 and Ser-966 activates it and is required for S-phase checkpoint activation. Ubiquitinated by the DCX(DCAF15) complex, leading to its degradation.

It is found in the nucleus. It localises to the chromosome. Its subcellular location is the centromere. Functionally, involved in chromosome cohesion during cell cycle and in DNA repair. Involved in DNA repair via its interaction with BRCA1 and its related phosphorylation by ATM, and works as a downstream effector in the ATM/NBS1 branch of S-phase checkpoint. Central component of cohesin complex. The cohesin complex is required for the cohesion of sister chromatids after DNA replication. The cohesin complex apparently forms a large proteinaceous ring within which sister chromatids can be trapped. At anaphase, the complex is cleaved and dissociates from chromatin, allowing sister chromatids to segregate. The cohesin complex may also play a role in spindle pole assembly during mitosis. Involved in DNA repair via its interaction with BRCA1 and its related phosphorylation by ATM, or via its phosphorylation by ATR. Works as a downstream effector both in the ATM/NBS1 branch and in the ATR/MSH2 branch of S-phase checkpoint. The polypeptide is Structural maintenance of chromosomes protein 1A (SMC1A) (Bos taurus (Bovine)).